The sequence spans 412 residues: uncharacterized protein (412 aa).

Repeat copies occupy residues 112–116 (GSIRS), 117–121 (GSIRS), 122–126 (GSIRD), 127–131 (GSIRD), 132–136 (GSIRS), 137–141 (GNIRD), and 142–146 (GSVRS). Residues 112–146 (GSIRSGSIRSGSIRDGSIRDGSIRSGNIRDGSVRS) form a 7 X 5 AA tandem repeats of G-[NS]-[IV]-R-[DS] region. Low complexity predominate over residues 116–126 (SGSIRSGSIRD). The interval 116 to 209 (SGSIRSGSIR…SEKSIKPSTK (94 aa)) is disordered. A compositionally biased stretch (basic and acidic residues) spans 192-209 (NHYAESEYSEKSIKPSTK).

The protein belongs to the asfivirus B407L family.

This is an uncharacterized protein from Ornithodoros (relapsing fever ticks).